The sequence spans 564 residues: MTKFVFVTGGVVSSLGKGIAAASLAALLETRGIRVTILKLDPYINVDPGTMNPFQHGEVFVTDDGAETDLDLGHYERFISTKMTRRNNFTTGQIYESVIRKERRGDYLGGTVQVIPHITDEIKLFIRNGVSDAQVAIVEIGGTVGDIESLPFLEAIRQMSVQLPHHDTCFIHLTLLPYISSAGELKTKPTQHSVKELREIGIQPDVLLCRSDRPLPLDERRKIALFTNVREESVISAIDVDNIYKIPALLHEQMLDEIVCHRLGILAKPANLTTWKKLIHALEHPEHEVSIALVGKYVDLTESYKSLSEALIHAGIHTRCKINIHYIDSENIERHGTGCLANMDAILVPGGFGKRGVEGKIMAISHARNHQIPYLGICLGMQLAVIEFARNCLQLENAHSTEFNPDTPYPVLGLITEWRDRRGQIEKRSPQTDLGGTMRLGGQECLLKPHTLARKIYGTDKIIERHRHRYEVNAEFIPQLEQAGLQVSGLSAAENLCEMIELPQSRHPWFVACQFHPEFTSTPRNGHPLFNDYVRAAISFADKSGHAKLRDHNMQKNVATDSTH.

The interval 1-265 (MTKFVFVTGG…DEIVCHRLGI (265 aa)) is amidoligase domain. Residue S13 participates in CTP binding. Position 13 (S13) interacts with UTP. Residues 14–19 (SLGKGI) and D71 each bind ATP. Mg(2+) is bound by residues D71 and E139. CTP is bound by residues 146-148 (DIE), 186-191 (KTKPTQ), and K222. Residues 186–191 (KTKPTQ) and K222 contribute to the UTP site. In terms of domain architecture, Glutamine amidotransferase type-1 spans 290 to 543 (SIALVGKYVD…VRAAISFADK (254 aa)). An L-glutamine-binding site is contributed by G351. The Nucleophile; for glutamine hydrolysis role is filled by C378. L-glutamine-binding positions include 379 to 382 (LGMQ), E402, and R469. Active-site residues include H516 and E518.

This sequence belongs to the CTP synthase family. As to quaternary structure, homotetramer.

It catalyses the reaction UTP + L-glutamine + ATP + H2O = CTP + L-glutamate + ADP + phosphate + 2 H(+). The enzyme catalyses L-glutamine + H2O = L-glutamate + NH4(+). It carries out the reaction UTP + NH4(+) + ATP = CTP + ADP + phosphate + 2 H(+). It functions in the pathway pyrimidine metabolism; CTP biosynthesis via de novo pathway; CTP from UDP: step 2/2. Its activity is regulated as follows. Allosterically activated by GTP, when glutamine is the substrate; GTP has no effect on the reaction when ammonia is the substrate. The allosteric effector GTP functions by stabilizing the protein conformation that binds the tetrahedral intermediate(s) formed during glutamine hydrolysis. Inhibited by the product CTP, via allosteric rather than competitive inhibition. Catalyzes the ATP-dependent amination of UTP to CTP with either L-glutamine or ammonia as the source of nitrogen. Regulates intracellular CTP levels through interactions with the four ribonucleotide triphosphates. This chain is CTP synthase, found in Nitrosomonas eutropha (strain DSM 101675 / C91 / Nm57).